We begin with the raw amino-acid sequence, 233 residues long: Snake venom serine protease BthaTL (233 aa).

Positions Val-1 to Ala-224 constitute a Peptidase S1 domain. Disulfide bonds link Cys-7–Cys-138, Cys-25–Cys-41, Cys-73–Cys-231, Cys-117–Cys-185, Cys-149–Cys-164, and Cys-175–Cys-200. Active-site charge relay system residues include His-40 and Asp-85. Ser-179 serves as the catalytic Charge relay system.

It belongs to the peptidase S1 family. Snake venom subfamily. In terms of assembly, monomer. In terms of tissue distribution, expressed by the venom gland.

It localises to the secreted. In terms of biological role, snake venom serine protease that may act in the hemostasis system of the prey. The polypeptide is Snake venom serine protease BthaTL (Bothrops alternatus (Urutu)).